The sequence spans 327 residues: Ventral anterior homeobox 1 (327 aa).

Residues 1-34 (MFGKQDKMDVRCSTETEANRVSKNGHKEGKDSKG) show a composition bias toward basic and acidic residues. Residues 1–41 (MFGKQDKMDVRCSTETEANRVSKNGHKEGKDSKGAEGNIST) are disordered. The segment at residues 99–158 (PKRTRTSFTAEQLYRLEMEFQRCQYVVGRERTELARQLNLSETQVKVWFQNRRTKQKKDQ) is a DNA-binding region (homeobox). The span at 230-245 (APAGGSPHPPSAGTAA) shows a compositional bias: low complexity. Residues 230-249 (APAGGSPHPPSAGTAAGPPP) form a disordered region.

The protein belongs to the EMX homeobox family.

It is found in the nucleus. Functionally, transcription factor that plays a role in establishing dorsal-ventral polarity in the neural retina. The polypeptide is Ventral anterior homeobox 1 (VAX1) (Gallus gallus (Chicken)).